The sequence spans 316 residues: Transaldolase 2 (316 aa).

Lysine 131 serves as the catalytic Schiff-base intermediate with substrate.

The protein belongs to the transaldolase family. Type 1 subfamily. In terms of assembly, homodimer.

Its subcellular location is the cytoplasm. It catalyses the reaction D-sedoheptulose 7-phosphate + D-glyceraldehyde 3-phosphate = D-erythrose 4-phosphate + beta-D-fructose 6-phosphate. The protein operates within carbohydrate degradation; pentose phosphate pathway; D-glyceraldehyde 3-phosphate and beta-D-fructose 6-phosphate from D-ribose 5-phosphate and D-xylulose 5-phosphate (non-oxidative stage): step 2/3. Functionally, transaldolase is important for the balance of metabolites in the pentose-phosphate pathway. This Shigella sonnei (strain Ss046) protein is Transaldolase 2.